The chain runs to 113 residues: UPF0102 protein SUN_0231 (113 aa).

The protein belongs to the UPF0102 family.

The protein is UPF0102 protein SUN_0231 of Sulfurovum sp. (strain NBC37-1).